A 409-amino-acid polypeptide reads, in one-letter code: Microfibrillar-associated protein 3-like (409 aa).

Positions 1–28 (MDRLKSHLTVCFLPSVPFLILVSTLATA) are cleaved as a signal peptide. Residues 29–149 (KSVTNSTLNG…LRVIFTSGDM (121 aa)) are Extracellular-facing. N-linked (GlcNAc...) asparagine glycans are attached at residues Asn-33, Asn-37, Asn-67, Asn-111, and Asn-135. The region spanning 47–141 (PVIIARTDHI…GTVNNTVTLR (95 aa)) is the Ig-like C2-type domain. An intrachain disulfide couples Cys-68 to Cys-125. The chain crosses the membrane as a helical span at residues 150–172 (GVYYMVVCLVAFTIVMVLNITRL). Residues 173–409 (CMMSSHLKKT…NTCIIYESHV (237 aa)) are Cytoplasmic-facing. Phosphotyrosine; by EGFR is present on Tyr-287. Disordered regions lie at residues 292-311 (SLKRSDSPAADSDASSLHEQ) and 320-385 (SVHP…VLPP). 4 positions are modified to phosphoserine: Ser-298, Ser-303, Ser-306, and Ser-307. Positions 339-355 (EVKDVEETELSAEHSPE) are enriched in basic and acidic residues. A compositionally biased stretch (low complexity) spans 363–377 (VTSTELTSEEPTPVE).

As to expression, highly expressed in testis.

It localises to the cell membrane. It is found in the nucleus. Its subcellular location is the cytoplasm. May participate in the nuclear signaling of EGFR and MAPK1/ERK2. May a have a role in metastasis. This is Microfibrillar-associated protein 3-like (MFAP3L) from Homo sapiens (Human).